Reading from the N-terminus, the 944-residue chain is Isoleucine--tRNA ligase (944 aa).

The 'HIGH' region signature appears at P58–H68. E563 contacts L-isoleucyl-5'-AMP. The short motif at K604–S608 is the 'KMSKS' region element. Residue K607 participates in ATP binding. Positions 907, 910, 927, and 930 each coordinate Zn(2+).

It belongs to the class-I aminoacyl-tRNA synthetase family. IleS type 1 subfamily. In terms of assembly, monomer. Requires Zn(2+) as cofactor.

It is found in the cytoplasm. The catalysed reaction is tRNA(Ile) + L-isoleucine + ATP = L-isoleucyl-tRNA(Ile) + AMP + diphosphate. In terms of biological role, catalyzes the attachment of isoleucine to tRNA(Ile). As IleRS can inadvertently accommodate and process structurally similar amino acids such as valine, to avoid such errors it has two additional distinct tRNA(Ile)-dependent editing activities. One activity is designated as 'pretransfer' editing and involves the hydrolysis of activated Val-AMP. The other activity is designated 'posttransfer' editing and involves deacylation of mischarged Val-tRNA(Ile). The polypeptide is Isoleucine--tRNA ligase (Salmonella typhi).